Here is a 774-residue protein sequence, read N- to C-terminus: Lysyl oxidase homolog 2 (774 aa).

An N-terminal signal peptide occupies residues 1 to 25 (MERRGSSCLCRCLALLALLPTLSLA). SRCR domains follow at residues 58 to 159 (LRLA…VVCS), 188 to 302 (IRAI…VSCV), 326 to 425 (VRLR…VRCN), and 435 to 544 (LRLN…VACS). 9 cysteine pairs are disulfide-bonded: C84–C148, C97–C158, C128–C138, C218–C291, C231–C301, C265–C275, C351–C414, C364–C424, and C395–C405. N-linked (GlcNAc...) asparagine glycosylation occurs at N288. N455 carries an N-linked (GlcNAc...) asparagine glycan. 3 disulfides stabilise this stretch: C464–C530, C477–C543, and C511–C521. Residues 548 to 751 (PDLVLNAEIV…WMYNCHIGGS (204 aa)) form a lysyl-oxidase like region. Residues D549 and L550 each coordinate Ca(2+). Intrachain disulfides connect C573–C625, C579–C695, C657–C673, and C663–C685. Positions 626, 628, and 630 each coordinate Cu cation. N-linked (GlcNAc...) asparagine glycosylation occurs at N644. The segment at residues 653 to 689 (KASFCLEDTECEGDIQKSYECANFGEQGITMGCWDMY) is a cross-link (lysine tyrosylquinone (Lys-Tyr)). 2',4',5'-topaquinone is present on Y689. 4 residues coordinate Ca(2+): E722, D724, N727, and N728. A disulfide bridge links C732 with C746.

Belongs to the lysyl oxidase family. In terms of assembly, component of some chromatin repressor complex. Interacts with SNAI1. Interacts with TAF10. Interacts with HSPA5. Interacts with EFEMP2. Cu cation serves as cofactor. Requires lysine tyrosylquinone residue as cofactor. The lysine tyrosylquinone cross-link (LTQ) is generated by condensation of the epsilon-amino group of a lysine with a topaquinone produced by oxidation of tyrosine. Post-translationally, N-glycosylated. N-glycosylation on Asn-455 and Asn-644 may be essential for proper folding and secretion; may be composed of a fucosylated carbohydrates attached to a trimannose N-linked glycan core.

Its subcellular location is the secreted. It is found in the extracellular space. The protein localises to the extracellular matrix. It localises to the basement membrane. The protein resides in the nucleus. Its subcellular location is the chromosome. It is found in the endoplasmic reticulum. The catalysed reaction is L-lysyl-[protein] + O2 + H2O = (S)-2-amino-6-oxohexanoyl-[protein] + H2O2 + NH4(+). Its activity is regulated as follows. Specifically inhibited by a mouse monoclonal antibody AB0023, inhibition occurs in a non-competitive manner. Mediates the post-translational oxidative deamination of lysine residues on target proteins leading to the formation of deaminated lysine (allysine). Acts as a transcription corepressor and specifically mediates deamination of trimethylated 'Lys-4' of histone H3 (H3K4me3), a specific tag for epigenetic transcriptional activation. Shows no activity against histone H3 when it is trimethylated on 'Lys-9' (H3K9me3) or 'Lys-27' (H3K27me3) or when 'Lys-4' is monomethylated (H3K4me1) or dimethylated (H3K4me2). Also mediates deamination of methylated TAF10, a member of the transcription factor IID (TFIID) complex, which induces release of TAF10 from promoters, leading to inhibition of TFIID-dependent transcription. LOXL2-mediated deamination of TAF10 results in transcriptional repression of genes required for embryonic stem cell pluripotency including POU5F1/OCT4, NANOG, KLF4 and SOX2. Involved in epithelial to mesenchymal transition (EMT) via interaction with SNAI1 and participates in repression of E-cadherin CDH1, probably by mediating deamination of histone H3. During EMT, involved with SNAI1 in negatively regulating pericentromeric heterochromatin transcription. SNAI1 recruits LOXL2 to pericentromeric regions to oxidize histone H3 and repress transcription which leads to release of heterochromatin component CBX5/HP1A, enabling chromatin reorganization and acquisition of mesenchymal traits. Interacts with the endoplasmic reticulum protein HSPA5 which activates the IRE1-XBP1 pathway of the unfolded protein response, leading to expression of several transcription factors involved in EMT and subsequent EMT induction. When secreted into the extracellular matrix, promotes cross-linking of extracellular matrix proteins by mediating oxidative deamination of peptidyl lysine residues in precursors to fibrous collagen and elastin. Acts as a regulator of sprouting angiogenesis, probably via collagen IV scaffolding. Acts as a regulator of chondrocyte differentiation, probably by regulating expression of factors that control chondrocyte differentiation. The sequence is that of Lysyl oxidase homolog 2 (LOXL2) from Bos taurus (Bovine).